The primary structure comprises 253 residues: L-cysteine S-thiosulfotransferase subunit SoxA (253 aa).

A signal peptide spans 1-17; that stretch reads MGKWVTIIFVLFLYAIA. A Cytochrome c domain is found at 44 to 129; the sequence is VYAEQGRDMF…SIATYVATLS (86 aa). Residues Cys64, Cys67, His68, Cys102, Cys165, Cys168, and His169 each contribute to the heme c site. Arg210 serves as a coordination point for substrate. Residue Cys214 coordinates heme c. Catalysis depends on Cys214, which acts as the Cysteine persulfide intermediate.

It belongs to the SoxA family. Heterodimer of SoxA and SoxX. Heme c serves as cofactor. Post-translationally, cysteine persulfide at Cys-214.

The protein resides in the periplasm. The enzyme catalyses L-cysteinyl-[SoxY protein] + thiosulfate + 2 Fe(III)-[cytochrome c] = S-sulfosulfanyl-L-cysteinyl-[SoxY protein] + 2 Fe(II)-[cytochrome c] + 2 H(+). The catalysed reaction is S-sulfanyl-L-cysteinyl-[SoxY protein] + thiosulfate + 2 Fe(III)-[cytochrome c] = S-(2-sulfodisulfanyl)-L-cysteinyl-[SoxY protein] + 2 Fe(II)-[cytochrome c] + 2 H(+). Functionally, C-type diheme cytochrome, which is part of the SoxAX cytochrome complex involved in sulfur oxidation. The SoxAX complex catalyzes the formation of a heterodisulfide bond between the conserved cysteine residue on a sulfur carrier SoxYZ complex subunit SoxY and thiosulfate or other inorganic sulfur substrates. This leads to the liberation of two electrons, which may be transferred from the SoxAX complex to another cytochrome c that then channels them into the respiratory electron transport chain. Some electrons may be used for reductive CO(2) fixation. The protein is L-cysteine S-thiosulfotransferase subunit SoxA of Hydrogenobacter thermophilus (strain DSM 6534 / IAM 12695 / TK-6).